Reading from the N-terminus, the 277-residue chain is Membrane protein insertase YidC 2 (277 aa).

Positions 1 to 22 (MKKYRKILAMLAVLAIVLVLSG) are cleaved as a signal peptide. The N-palmitoyl cysteine moiety is linked to residue cysteine 23. Cysteine 23 is lipidated: S-diacylglycerol cysteine. 5 helical membrane passes run 35-55 (FWDG…SNLF), 60-80 (GLGI…LMIF), 130-150 (ASML…QAIW), 170-190 (PYYV…WLAM), and 208-228 (PVII…YWVI). Over residues 251–266 (EAKKQAERDRKRTLEK) the composition is skewed to basic and acidic residues. The tract at residues 251 to 277 (EAKKQAERDRKRTLEKARKRAIRNHKR) is disordered. Basic residues predominate over residues 267 to 277 (ARKRAIRNHKR).

The protein belongs to the OXA1/ALB3/YidC family. Type 2 subfamily.

Its subcellular location is the cell membrane. Its function is as follows. Required for the insertion and/or proper folding and/or complex formation of integral membrane proteins into the membrane. Involved in integration of membrane proteins that insert both dependently and independently of the Sec translocase complex, as well as at least some lipoproteins. This chain is Membrane protein insertase YidC 2, found in Lactiplantibacillus plantarum (strain ATCC BAA-793 / NCIMB 8826 / WCFS1) (Lactobacillus plantarum).